The primary structure comprises 91 residues: UPF0367 protein cce_2199 (91 aa).

It belongs to the UPF0367 family.

This is UPF0367 protein cce_2199 from Crocosphaera subtropica (strain ATCC 51142 / BH68) (Cyanothece sp. (strain ATCC 51142)).